An 802-amino-acid chain; its full sequence is ATP-dependent zinc metalloprotease FTSH 3, mitochondrial (802 aa).

Residues 1 to 21 (MSLSSLSRALARSARSSRQRQ) constitute a mitochondrion transit peptide. The segment covering 1-23 (MSLSSLSRALARSARSSRQRQGS) has biased composition (low complexity). Disordered stretches follow at residues 1–33 (MSLS…GLRA) and 85–120 (DKSK…SGDQ). Residues 85–113 (DKSKKNHGKHSEEENKGKGDESDKSDSKK) are compositionally biased toward basic and acidic residues. The helical transmembrane segment at 133–153 (MIAPLFLFGLLLLSASASSSE) threads the bilayer. 360–367 (GPPGTGKT) contacts ATP. Histidine 585 contacts Zn(2+). Glutamate 586 is an active-site residue. Positions 589 and 661 each coordinate Zn(2+). The disordered stretch occupies residues 773-802 (KQGFQDEDSNRNAELSNADGASSLGEAVAS).

The protein in the N-terminal section; belongs to the AAA ATPase family. This sequence in the C-terminal section; belongs to the peptidase M41 family. Zn(2+) serves as cofactor.

The protein resides in the mitochondrion inner membrane. Its function is as follows. Probable ATP-dependent zinc metallopeptidase. This chain is ATP-dependent zinc metalloprotease FTSH 3, mitochondrial (FTSH3), found in Oryza sativa subsp. japonica (Rice).